The sequence spans 876 residues: Phosphoenolpyruvate carboxylase (876 aa).

Catalysis depends on residues H138 and K544.

Belongs to the PEPCase type 1 family. The cofactor is Mg(2+).

It carries out the reaction oxaloacetate + phosphate = phosphoenolpyruvate + hydrogencarbonate. Forms oxaloacetate, a four-carbon dicarboxylic acid source for the tricarboxylic acid cycle. This is Phosphoenolpyruvate carboxylase from Marinomonas sp. (strain MWYL1).